A 75-amino-acid chain; its full sequence is Exodeoxyribonuclease 7 small subunit (75 aa).

This sequence belongs to the XseB family. Heterooligomer composed of large and small subunits.

It is found in the cytoplasm. It catalyses the reaction Exonucleolytic cleavage in either 5'- to 3'- or 3'- to 5'-direction to yield nucleoside 5'-phosphates.. Functionally, bidirectionally degrades single-stranded DNA into large acid-insoluble oligonucleotides, which are then degraded further into small acid-soluble oligonucleotides. The polypeptide is Exodeoxyribonuclease 7 small subunit (Listeria monocytogenes serotype 4b (strain CLIP80459)).